We begin with the raw amino-acid sequence, 348 residues long: S-adenosylmethionine:tRNA ribosyltransferase-isomerase (348 aa).

This sequence belongs to the QueA family. Monomer.

The protein localises to the cytoplasm. The enzyme catalyses 7-aminomethyl-7-carbaguanosine(34) in tRNA + S-adenosyl-L-methionine = epoxyqueuosine(34) in tRNA + adenine + L-methionine + 2 H(+). It functions in the pathway tRNA modification; tRNA-queuosine biosynthesis. In terms of biological role, transfers and isomerizes the ribose moiety from AdoMet to the 7-aminomethyl group of 7-deazaguanine (preQ1-tRNA) to give epoxyqueuosine (oQ-tRNA). The polypeptide is S-adenosylmethionine:tRNA ribosyltransferase-isomerase (Amoebophilus asiaticus (strain 5a2)).